Reading from the N-terminus, the 702-residue chain is Ribosomal RNA large subunit methyltransferase K/L (702 aa).

The region spanning 43 to 154 (LIYQSLMWSR…KETAHISLDL (112 aa)) is the THUMP domain.

It belongs to the methyltransferase superfamily. RlmKL family.

It localises to the cytoplasm. It catalyses the reaction guanosine(2445) in 23S rRNA + S-adenosyl-L-methionine = N(2)-methylguanosine(2445) in 23S rRNA + S-adenosyl-L-homocysteine + H(+). The catalysed reaction is guanosine(2069) in 23S rRNA + S-adenosyl-L-methionine = N(2)-methylguanosine(2069) in 23S rRNA + S-adenosyl-L-homocysteine + H(+). Its function is as follows. Specifically methylates the guanine in position 2445 (m2G2445) and the guanine in position 2069 (m7G2069) of 23S rRNA. This Enterobacter sp. (strain 638) protein is Ribosomal RNA large subunit methyltransferase K/L.